The sequence spans 287 residues: 2-dehydro-3-deoxyphosphooctonate aldolase (287 aa).

The protein belongs to the KdsA family.

The protein resides in the cytoplasm. The enzyme catalyses D-arabinose 5-phosphate + phosphoenolpyruvate + H2O = 3-deoxy-alpha-D-manno-2-octulosonate-8-phosphate + phosphate. It functions in the pathway carbohydrate biosynthesis; 3-deoxy-D-manno-octulosonate biosynthesis; 3-deoxy-D-manno-octulosonate from D-ribulose 5-phosphate: step 2/3. The protein operates within bacterial outer membrane biogenesis; lipopolysaccharide biosynthesis. The protein is 2-dehydro-3-deoxyphosphooctonate aldolase of Bradyrhizobium sp. (strain ORS 278).